Here is a 994-residue protein sequence, read N- to C-terminus: UPF0182 protein Strop_3729 (994 aa).

7 helical membrane-spanning segments follow: residues 18–38 (IGVLVGVFVLFTLLGWGVQAW), 61–81 (LLLFVTVGLAMAVIVGGNLWL), 110–130 (IGLWFATVSVVVGLFAGLSAQ), 174–194 (FTAVVLALLGALAVHYVFGGI), 209–229 (AHLSTLVAVFVLLKAVAYVLD), 260–280 (ILAYISVVVAIAVLVFSNAWM), and 283–303 (LVWPGISLALLGVSAVAIGGI). Disordered stretches follow at residues 891–934 (GEQA…AEAA) and 970–994 (FEQAAASTPAATPTAAPTGSPSPGG). A compositionally biased stretch (pro residues) spans 897–926 (PSPPPSDDETPPSPTPTPTPTTPSVTPPPL).

The protein belongs to the UPF0182 family.

Its subcellular location is the cell membrane. The chain is UPF0182 protein Strop_3729 from Salinispora tropica (strain ATCC BAA-916 / DSM 44818 / JCM 13857 / NBRC 105044 / CNB-440).